We begin with the raw amino-acid sequence, 403 residues long: Phosphopentomutase (403 aa).

Residues Asp-13, Asp-298, His-303, Asp-339, His-340, and His-351 each contribute to the Mn(2+) site.

Belongs to the phosphopentomutase family. The cofactor is Mn(2+).

It is found in the cytoplasm. It catalyses the reaction 2-deoxy-alpha-D-ribose 1-phosphate = 2-deoxy-D-ribose 5-phosphate. The catalysed reaction is alpha-D-ribose 1-phosphate = D-ribose 5-phosphate. It functions in the pathway carbohydrate degradation; 2-deoxy-D-ribose 1-phosphate degradation; D-glyceraldehyde 3-phosphate and acetaldehyde from 2-deoxy-alpha-D-ribose 1-phosphate: step 1/2. Its function is as follows. Isomerase that catalyzes the conversion of deoxy-ribose 1-phosphate (dRib-1-P) and ribose 1-phosphate (Rib-1-P) to deoxy-ribose 5-phosphate (dRib-5-P) and ribose 5-phosphate (Rib-5-P), respectively. The protein is Phosphopentomutase of Streptococcus gordonii (strain Challis / ATCC 35105 / BCRC 15272 / CH1 / DL1 / V288).